The primary structure comprises 236 residues: Purine nucleoside phosphorylase DeoD-type (236 aa).

His5 serves as a coordination point for a purine D-ribonucleoside. Phosphate-binding positions include Gly21, Arg25, Arg44, and 88 to 91 (RIGS). Residues 180 to 182 (EME) and 204 to 205 (SD) contribute to the a purine D-ribonucleoside site. Residue Asp205 is the Proton donor of the active site.

It belongs to the PNP/UDP phosphorylase family. Homohexamer; trimer of homodimers.

It catalyses the reaction a purine D-ribonucleoside + phosphate = a purine nucleobase + alpha-D-ribose 1-phosphate. It carries out the reaction a purine 2'-deoxy-D-ribonucleoside + phosphate = a purine nucleobase + 2-deoxy-alpha-D-ribose 1-phosphate. In terms of biological role, catalyzes the reversible phosphorolytic breakdown of the N-glycosidic bond in the beta-(deoxy)ribonucleoside molecules, with the formation of the corresponding free purine bases and pentose-1-phosphate. This chain is Purine nucleoside phosphorylase DeoD-type, found in Hahella chejuensis (strain KCTC 2396).